Here is a 65-residue protein sequence, read N- to C-terminus: Weak neurotoxin 6 (65 aa).

Cystine bridges form between Cys3/Cys24, Cys6/Cys11, Cys17/Cys42, Cys46/Cys57, and Cys58/Cys63.

It belongs to the three-finger toxin family. Ancestral subfamily. Orphan group II sub-subfamily. In terms of tissue distribution, expressed by the venom gland.

The protein localises to the secreted. Functionally, binds with low affinity to muscular (alpha-1-beta-1-delta-epsilon/CHRNA1-CHRNB1-CHRND-CHRNE) and very low affinity to neuronal (alpha-7/CHRNA7) nicotinic acetylcholine receptor (nAChR). The polypeptide is Weak neurotoxin 6 (Naja naja (Indian cobra)).